The primary structure comprises 239 residues: Xyloglucan-specific endo-beta-1,4-glucanase A (239 aa).

A signal peptide spans 1 to 14 (MKLLALSLASLASA). N172 carries an N-linked (GlcNAc...) asparagine glycan.

This sequence belongs to the glycosyl hydrolase 12 (cellulase H) family.

The protein localises to the secreted. The enzyme catalyses xyloglucan + H2O = xyloglucan oligosaccharides.. Its function is as follows. Catalyzes endohydrolysis of 1,4-beta-D-glucosidic linkages in xyloglucan with retention of the beta-configuration of the glycosyl residues. Specific for xyloglucan and does not hydrolyze other cell wall components. Active against tamarind xyloglucan. The sequence is that of Xyloglucan-specific endo-beta-1,4-glucanase A (xgeA) from Emericella nidulans (strain FGSC A4 / ATCC 38163 / CBS 112.46 / NRRL 194 / M139) (Aspergillus nidulans).